The chain runs to 669 residues: UvrABC system protein B (669 aa).

One can recognise a Helicase ATP-binding domain in the interval 27 to 414 (ESLQGEHKFQ…EARVIEQVIR (388 aa)). Residue 40–47 (GATGTGKT) participates in ATP binding. A Beta-hairpin motif is present at residues 93 to 116 (YYDYYQPEAYIPVTDTYIEKTASI). The 167-residue stretch at 431–597 (QVDDLYGEIQ…PINKRANNAI (167 aa)) folds into the Helicase C-terminal domain. Residues 628–663 (PDLIQQLEEKMQEAAKKQEFEVAAIYRDRIQHLRDR) enclose the UVR domain.

The protein belongs to the UvrB family. As to quaternary structure, forms a heterotetramer with UvrA during the search for lesions. Interacts with UvrC in an incision complex.

Its subcellular location is the cytoplasm. Functionally, the UvrABC repair system catalyzes the recognition and processing of DNA lesions. A damage recognition complex composed of 2 UvrA and 2 UvrB subunits scans DNA for abnormalities. Upon binding of the UvrA(2)B(2) complex to a putative damaged site, the DNA wraps around one UvrB monomer. DNA wrap is dependent on ATP binding by UvrB and probably causes local melting of the DNA helix, facilitating insertion of UvrB beta-hairpin between the DNA strands. Then UvrB probes one DNA strand for the presence of a lesion. If a lesion is found the UvrA subunits dissociate and the UvrB-DNA preincision complex is formed. This complex is subsequently bound by UvrC and the second UvrB is released. If no lesion is found, the DNA wraps around the other UvrB subunit that will check the other stand for damage. This Synechocystis sp. (strain ATCC 27184 / PCC 6803 / Kazusa) protein is UvrABC system protein B.